A 157-amino-acid chain; its full sequence is uncharacterized protein (157 aa).

The 139-residue stretch at 9-147 (LLINYKTLDE…DFYVWHPEVN (139 aa)) folds into the N-acetyltransferase domain.

This is an uncharacterized protein from Bacillus cereus (strain 03BB102).